The following is a 257-amino-acid chain: Tryptophan synthase alpha chain (257 aa).

Catalysis depends on proton acceptor residues glutamate 46 and aspartate 57.

The protein belongs to the TrpA family. Tetramer of two alpha and two beta chains.

The catalysed reaction is (1S,2R)-1-C-(indol-3-yl)glycerol 3-phosphate + L-serine = D-glyceraldehyde 3-phosphate + L-tryptophan + H2O. It participates in amino-acid biosynthesis; L-tryptophan biosynthesis; L-tryptophan from chorismate: step 5/5. The alpha subunit is responsible for the aldol cleavage of indoleglycerol phosphate to indole and glyceraldehyde 3-phosphate. The polypeptide is Tryptophan synthase alpha chain (Parabacteroides distasonis (strain ATCC 8503 / DSM 20701 / CIP 104284 / JCM 5825 / NCTC 11152)).